A 233-amino-acid polypeptide reads, in one-letter code: Glucosamine-6-phosphate deaminase (233 aa).

D62 acts as the Proton acceptor; for enolization step in catalysis. Residue N128 is the For ring-opening step of the active site. Catalysis depends on H130, which acts as the Proton acceptor; for ring-opening step. Residue E135 is the For ring-opening step of the active site.

This sequence belongs to the glucosamine/galactosamine-6-phosphate isomerase family. NagB subfamily.

The catalysed reaction is alpha-D-glucosamine 6-phosphate + H2O = beta-D-fructose 6-phosphate + NH4(+). It participates in amino-sugar metabolism; N-acetylneuraminate degradation; D-fructose 6-phosphate from N-acetylneuraminate: step 5/5. Functionally, catalyzes the reversible isomerization-deamination of glucosamine 6-phosphate (GlcN6P) to form fructose 6-phosphate (Fru6P) and ammonium ion. This is Glucosamine-6-phosphate deaminase from Streptococcus agalactiae serotype Ia (strain ATCC 27591 / A909 / CDC SS700).